Reading from the N-terminus, the 473-residue chain is Putative protein TIC 214 C-terminal part (473 aa).

This sequence belongs to the TIC214 family. Part of the Tic complex.

The protein localises to the plastid. Its subcellular location is the chloroplast. Involved in protein precursor import into chloroplasts. May be part of an intermediate translocation complex acting as a protein-conducting channel at the inner envelope. The protein is Putative protein TIC 214 C-terminal part of Anthoceros angustus (Hornwort).